The following is a 214-amino-acid chain: MGRRPARCYRYCKNKPYPKSRFCRGVPDAKIRIFDLGRKKAKVDEFPLGGHMVSDEYEQLSSEALEAARICANKYMVKSCGRDGFHMRVRLHPFHVIRINKMLSCAGADRLQTGMRGAFGKPQGTVARVHIGQVIMSIRTKLQNEEHVIEALRRAKFKFPGRQKIHISKKWGFTKFNADEFEDMVAKKCLIPDGCGVKYVPSHGPLDKWRVLHS.

Belongs to the universal ribosomal protein uL16 family. Component of a male germ cell-specific 60S large ribosomal subunit (LSU), which contains RPL10L and RPL39L, instead of RPL10 and RPL39 paralogs. The composition of the rest of the complex is similar to classical ribosomes. Almost testis-specific. Also expressed in pre- and postmenopausal ovary.

The protein localises to the cytoplasm. Testis-specific component of the ribosome, which is required for the transition from prophase to metaphase in male meiosis I. Compensates for the inactivated X-linked RPL10 paralog during spermatogenesis. The ribosome is a large ribonucleoprotein complex responsible for the synthesis of proteins in the cell. The male germ cell-specific ribosome displays a ribosomal polypeptide exit tunnel of distinct size and charge states compared with the classical ribosome. It is responsible for regulating the biosynthesis and folding of a subset of male germ-cell-specific proteins that are essential for the formation of sperm. The chain is Ribosomal protein uL16-like from Homo sapiens (Human).